The sequence spans 494 residues: MLASGLLLVTLLACLTVMVLMSVWRQRKSRGKLPPGPTPLPFIGNYLQLNTEQMYNSLMKISERYGPVFTIHLGPRRVVVLCGHDAVKEALVDQAEEFSGRGEQATFDWLFKGYGVAFSNGERAKQLRRFSIATLRGFGVGKRGIEERIQEEAGFLIDALRGTHGANIDPTFFLSRTVSNVISSIVFGDRFDYEDKEFLSLLRMMLGSFQFTATSTGQLYEMFSSVMKHLPGPQQQAFKELQGLEDFIAKKVEHNQRTLDPNSPRDFIDSFLIRMQEEEKNPNTEFYLKNLVMTTLNLFFAGTETVSTTLRYGFLLLMKHPEVEAKVHEEIDRVIGKNRQPKFEDRAKMPYTEAVIHEIQRFGDMLPMGLAHRVNKDTKFRDFFLPKGTEVFPMLGSVLRDPRFFSNPRDFNPQHFLDKKGQFKKSDAFVPFSIGKRYCFGEGLARMELFLFFTTIMQNFRFKSPQSPKDIDVSPKHVGFATIPRNYTMSFLPR.

Residue Asn-297 coordinates substrate. Cys-439 serves as a coordination point for heme.

It belongs to the cytochrome P450 family. Heme is required as a cofactor. As to expression, expressed in liver and a number of extrahepatic tissues, including nasal mucosa, lung, trachea, brain, mammary gland, prostate, testis, and uterus, but not in heart, kidney, bone marrow, colon, small intestine, spleen, stomach, thymus, or skeletal muscle.

Its subcellular location is the endoplasmic reticulum membrane. The protein localises to the microsome membrane. It carries out the reaction an organic molecule + reduced [NADPH--hemoprotein reductase] + O2 = an alcohol + oxidized [NADPH--hemoprotein reductase] + H2O + H(+). Exhibits a coumarin 7-hydroxylase activity. Active in the metabolic activation of hexamethylphosphoramide, N,N-dimethylaniline, 2'-methoxyacetophenone, N-nitrosomethylphenylamine, and the tobacco-specific carcinogen, 4-(methylnitrosamino)-1-(3-pyridyl)-1-butanone. Possesses phenacetin O-deethylation activity. The sequence is that of Cytochrome P450 2A13 (CYP2A13) from Homo sapiens (Human).